Here is a 173-residue protein sequence, read N- to C-terminus: Co-chaperone protein HscB (173 aa).

A J domain is found at 2–74 (DYFTLLGMPN…LSRAEYMLSL (73 aa)).

It belongs to the HscB family. In terms of assembly, interacts with HscA and stimulates its ATPase activity. Interacts with IscU.

Functionally, co-chaperone involved in the maturation of iron-sulfur cluster-containing proteins. Seems to help targeting proteins to be folded toward HscA. The protein is Co-chaperone protein HscB of Proteus mirabilis (strain HI4320).